Consider the following 346-residue polypeptide: Aldose 1-epimerase (346 aa).

Arg-79 provides a ligand contact to substrate. His-175 acts as the Proton donor in catalysis. Position 245 (Asp-245) interacts with substrate. The active-site Proton acceptor is the Glu-309.

Belongs to the aldose epimerase family.

It is found in the cytoplasm. The catalysed reaction is alpha-D-glucose = beta-D-glucose. The protein operates within carbohydrate metabolism; hexose metabolism. In terms of biological role, mutarotase converts alpha-aldose to the beta-anomer. It is active on D-glucose, L-arabinose, D-xylose, D-galactose, maltose and lactose. The chain is Aldose 1-epimerase (galM) from Escherichia coli (strain K12).